A 284-amino-acid polypeptide reads, in one-letter code: Tropomyosin Per a 7.0103 (284 aa).

Positions 1–266 (MDAIKKKMQA…EDELVHEKEK (266 aa)) form a coiled coil.

Belongs to the tropomyosin family. Homodimer.

Its function is as follows. Tropomyosin, in association with the troponin complex, plays a central role in the calcium dependent regulation of muscle contraction. In Periplaneta americana (American cockroach), this protein is Tropomyosin Per a 7.0103.